The chain runs to 421 residues: NAD-specific glutamate dehydrogenase (421 aa).

The substrate site is built by lysine 71 and lysine 95. Lysine 107 functions as the Proton donor in the catalytic mechanism. NAD(+)-binding residues include threonine 191 and asparagine 222. Substrate is bound at residue serine 355.

Belongs to the Glu/Leu/Phe/Val dehydrogenases family. As to quaternary structure, homohexamer.

It carries out the reaction L-glutamate + NAD(+) + H2O = 2-oxoglutarate + NH4(+) + NADH + H(+). This is NAD-specific glutamate dehydrogenase (gluD) from Clostridioides difficile (Peptoclostridium difficile).